The chain runs to 310 residues: Glutaminase 1 (310 aa).

Residues serine 66, asparagine 117, glutamate 161, asparagine 168, tyrosine 192, tyrosine 244, and valine 262 each contribute to the substrate site. Lysine 294 carries the post-translational modification N6-acetyllysine.

It belongs to the glutaminase family. In terms of assembly, homotetramer.

The enzyme catalyses L-glutamine + H2O = L-glutamate + NH4(+). This is Glutaminase 1 from Escherichia coli O6:H1 (strain CFT073 / ATCC 700928 / UPEC).